Here is a 238-residue protein sequence, read N- to C-terminus: Tetrahydromethanopterin S-methyltransferase subunit A 1 (238 aa).

The Cytoplasmic portion of the chain corresponds to 2-218 (VEKKSPAEGW…RMFAGMYSGK (217 aa)). A 5-hydroxybenzimidazolylcob(I)amide-binding site is contributed by His-84. The chain crosses the membrane as a helical span at residues 219–237 (VQGIMIGLAFTLTLGILLL). Position 238 (Val-238) is a topological domain, extracellular.

Belongs to the MtrA family. As to quaternary structure, the complex is composed of 8 subunits; MtrA, MtrB, MtrC, MtrD, MtrE, MtrF, MtrG and MtrH. 5-hydroxybenzimidazolylcob(I)amide serves as cofactor.

The protein localises to the cell membrane. The catalysed reaction is 5-methyl-5,6,7,8-tetrahydromethanopterin + coenzyme M + 2 Na(+)(in) = 5,6,7,8-tetrahydromethanopterin + methyl-coenzyme M + 2 Na(+)(out). The protein operates within one-carbon metabolism; methanogenesis from CO(2); methyl-coenzyme M from 5,10-methylene-5,6,7,8-tetrahydromethanopterin: step 2/2. In terms of biological role, part of a complex that catalyzes the formation of methyl-coenzyme M and tetrahydromethanopterin from coenzyme M and methyl-tetrahydromethanopterin. This is an energy-conserving, sodium-ion translocating step. The polypeptide is Tetrahydromethanopterin S-methyltransferase subunit A 1 (Methanothermobacter marburgensis (strain ATCC BAA-927 / DSM 2133 / JCM 14651 / NBRC 100331 / OCM 82 / Marburg) (Methanobacterium thermoautotrophicum)).